The primary structure comprises 466 residues: Soluble pyridine nucleotide transhydrogenase (466 aa).

36 to 45 provides a ligand contact to FAD; that stretch reads EKESSVGGGC.

It belongs to the class-I pyridine nucleotide-disulfide oxidoreductase family. Requires FAD as cofactor.

The protein resides in the cytoplasm. It carries out the reaction NAD(+) + NADPH = NADH + NADP(+). Functionally, conversion of NADPH, generated by peripheral catabolic pathways, to NADH, which can enter the respiratory chain for energy generation. The chain is Soluble pyridine nucleotide transhydrogenase from Vibrio vulnificus (strain CMCP6).